A 299-amino-acid chain; its full sequence is MAPSQLPPIFNPTQQDIEQLLAAQCHLGSKNLQVHMEPYLWKTRPDGVNVINIGKTWEKILLAARIIAAVENPADICVISARPYGQRAVLKFAAHTGATAIAGRFTPGNFTNYITRSFKEPRLIIVTDPRTDSQAIKEASYVNIPVLALCDTDSPTDFVDVAIPTNNKGRHSIGLVWWMLAREVLRLRGTLATRETEWDVVPDLYFYRDPEAEENKEIADESKVATAEEVGAGAIESGFAGENWDTQGAGAGVPGTAFAAASAAGPTSWEADGADWAASSAPAAAGESWAETQPAEGKW.

Residues 259-291 (AAASAAGPTSWEADGADWAASSAPAAAGESWAE) show a composition bias toward low complexity. A disordered region spans residues 259-299 (AAASAAGPTSWEADGADWAASSAPAAAGESWAETQPAEGKW).

This sequence belongs to the universal ribosomal protein uS2 family. As to quaternary structure, component of the small ribosomal subunit. Mature ribosomes consist of a small (40S) and a large (60S) subunit. The 40S subunit contains about 33 different proteins and 1 molecule of RNA (18S). The 60S subunit contains about 49 different proteins and 3 molecules of RNA (25S, 5.8S and 5S). Interacts with rps21.

The protein resides in the cytoplasm. Required for the assembly and/or stability of the 40S ribosomal subunit. Required for the processing of the 20S rRNA-precursor to mature 18S rRNA in a late step of the maturation of 40S ribosomal subunits. The protein is Small ribosomal subunit protein uS2 (rps0) of Aspergillus flavus (strain ATCC 200026 / FGSC A1120 / IAM 13836 / NRRL 3357 / JCM 12722 / SRRC 167).